The chain runs to 235 residues: DUP240 protein DFP4 (235 aa).

Topologically, residues 1–44 (MSSELLISNSKPRPEGLRKLCEGETVILPRDITPSKCAYFLKQN) are cytoplasmic. The chain crosses the membrane as a helical span at residues 45–65 (IVFISYIFIHIIITIILNRLA). Residues 66 to 72 (LSAHGNT) are Extracellular-facing. A helical transmembrane segment spans residues 73–93 (LIIILAALLITISLFLLLLLP). Topologically, residues 94–235 (YLSCSRYKLR…DKYPEMGVTV (142 aa)) are cytoplasmic.

Belongs to the DUP/COS family. Interacts according to large scale protein interaction studies with BZZ1, SRB4 and SUA7.

The protein localises to the cell membrane. This Saccharomyces cerevisiae (strain ATCC 204508 / S288c) (Baker's yeast) protein is DUP240 protein DFP4.